The chain runs to 379 residues: MLPQNSQVVHGVQDGPPVGPQPAQALLKVPVDVRRQAQAGPLAGVEPRPRLGVGAHHTPGVPVPLILGAVQHVHLLPGPRGQCLGHPLDVVHPLAQHQPLYVGPEEHPVGQGGVPLGVIGLGLDHRVPVHLARDLAKLGLYVHARAEYLHLVGPGVDPVHRAVLPAEKGPQCSVVVVVPHGCSAQTQQVRGPHRQEDPTRHGGRQLVGLIHNQEKFCGRVLGLDPPVSQRSRTRHIQVPGQGVGRRGAGCKDPRVRKEPGRRVPPLSRQHPPVCQDEGGQPQPPPQLQGHEGLAEAGRALEHAVPLGGDVAPGLLQDPFLVRSERDGAPLPGCAVSGRRFASQDPGTPGEGDVGLSPGREGKQVRFPRAGHVSIYRVEP.

3 disordered regions span residues Met-1–Pro-20, Val-227–His-290, and Pro-331–His-371. Over residues Gln-7–Pro-20 the composition is skewed to low complexity. Basic and acidic residues predominate over residues Gly-249–Arg-261.

This is an uncharacterized protein from Dryophytes versicolor (chameleon treefrog).